An 87-amino-acid chain; its full sequence is Large ribosomal subunit protein bL27 (87 aa).

This sequence belongs to the bacterial ribosomal protein bL27 family.

The protein is Large ribosomal subunit protein bL27 of Stenotrophomonas maltophilia (strain R551-3).